We begin with the raw amino-acid sequence, 244 residues long: Probable Ni/Fe-hydrogenase B-type cytochrome subunit (244 aa).

4 helical membrane passes run 39 to 59 (LWHW…FFIG), 73 to 93 (FLMG…AIGM), 150 to 171 (FAMF…FAMY), and 204 to 221 (LGMW…YAAI).

Belongs to the HupC/HyaC/HydC family.

Its subcellular location is the cell membrane. Probable b-type cytochrome. This is Probable Ni/Fe-hydrogenase B-type cytochrome subunit (hoxZ) from Cupriavidus necator (strain ATCC 17699 / DSM 428 / KCTC 22496 / NCIMB 10442 / H16 / Stanier 337) (Ralstonia eutropha).